The sequence spans 193 residues: A-type ATP synthase subunit E (193 aa).

Belongs to the V-ATPase E subunit family. As to quaternary structure, has multiple subunits with at least A(3), B(3), C, D, E, F, H, I and proteolipid K(x).

The protein resides in the cell membrane. Functionally, component of the A-type ATP synthase that produces ATP from ADP in the presence of a proton gradient across the membrane. The chain is A-type ATP synthase subunit E from Haloquadratum walsbyi (strain DSM 16790 / HBSQ001).